The sequence spans 565 residues: 4-coumarate--CoA ligase-like 2 (565 aa).

ATP contacts are provided by serine 221, serine 222, glycine 223, threonine 224, threonine 225, and lysine 229. (E)-4-coumaroyl-AMP is bound at residue phenylalanine 265. Lysine 286 is a binding site for CoA. The interval 288-359 (DMAKLLSAVE…ENYPKVKILQ (72 aa)) is SBD1. (E)-4-coumaroyl-AMP-binding residues include glycine 337, glutamine 359, glycine 360, and threonine 364. Glutamine 359, glycine 360, threonine 364, aspartate 445, and arginine 460 together coordinate ATP. The tract at residues 360–424 (GYGLTESTAI…IRSPTVMKGY (65 aa)) is SBD2. Residues lysine 462 and lysine 466 each coordinate (E)-4-coumaroyl-AMP. Glycine 469 is a binding site for CoA. Residue lysine 551 participates in ATP binding. The short motif at 563-565 (SKL) is the Microbody targeting signal element.

The protein belongs to the ATP-dependent AMP-binding enzyme family. It depends on Mg(2+) as a cofactor.

It localises to the peroxisome. The catalysed reaction is (E)-4-coumarate + ATP + CoA = (E)-4-coumaroyl-CoA + AMP + diphosphate. It catalyses the reaction (E)-4-coumarate + ATP + H(+) = (E)-4-coumaroyl-AMP + diphosphate. The enzyme catalyses (E)-4-coumaroyl-AMP + CoA = (E)-4-coumaroyl-CoA + AMP + H(+). In terms of biological role, carboxylate--CoA ligase that may use 4-coumarate as substrate. Follows a two-step reaction mechanism, wherein the carboxylate substrate first undergoes adenylation by ATP, followed by a thioesterification in the presence of CoA to yield the final CoA thioester. In Arabidopsis thaliana (Mouse-ear cress), this protein is 4-coumarate--CoA ligase-like 2.